The primary structure comprises 269 residues: Glutamate racemase (269 aa).

Residues 13-14 (DS) and 45-46 (YS) each bind substrate. The Proton donor/acceptor role is filled by Cys77. 78 to 79 (NT) contacts substrate. Cys188 acts as the Proton donor/acceptor in catalysis. 189 to 190 (TH) contacts substrate.

It belongs to the aspartate/glutamate racemases family.

The enzyme catalyses L-glutamate = D-glutamate. The protein operates within cell wall biogenesis; peptidoglycan biosynthesis. Its function is as follows. Provides the (R)-glutamate required for cell wall biosynthesis. This chain is Glutamate racemase, found in Pasteurella multocida (strain Pm70).